A 200-amino-acid polypeptide reads, in one-letter code: ATP synthase subunit s, mitochondrial (200 aa).

The N-terminal 25 residues, 1–25 (MMLFGKVSQQLCGIKKLPWSCDSRY), are a transit peptide targeting the mitochondrion. The N-terminal domain stretch occupies residues 1-61 (MMLFGKVSQQ…SEWLLRCGAM (61 aa)). Glycine 59 provides a ligand contact to Mg(2+). 4 LRR repeats span residues 62–87 (VRYHGQERWQTDYNHLPTGPLDKYKI), 88–116 (QAIDATNSCIMSIGFDHMVGLQHVEKIRL), 117–141 (CKCHFIEDDCLLRLGQLENLQKSIL), and 142–173 (EMEIISCGNITDKGIIASRHLRNLKYLLLSDL). Threonine 93 contacts Mg(2+).

Belongs to the ATP synthase subunit s family. Homotetramer. Associates with ATP synthase.

It localises to the mitochondrion. The protein resides in the mitochondrion inner membrane. Functionally, involved in regulation of mitochondrial membrane ATP synthase. Necessary for H(+) conduction of ATP synthase. Facilitates energy-driven catalysis of ATP synthesis by blocking a proton leak through an alternative proton exit pathway. The protein is ATP synthase subunit s, mitochondrial (DMAC2L) of Macaca fascicularis (Crab-eating macaque).